The primary structure comprises 445 residues: Argininosuccinate lyase (445 aa).

Belongs to the lyase 1 family. Argininosuccinate lyase subfamily.

It localises to the cytoplasm. It catalyses the reaction 2-(N(omega)-L-arginino)succinate = fumarate + L-arginine. Its pathway is amino-acid biosynthesis; L-arginine biosynthesis; L-arginine from L-ornithine and carbamoyl phosphate: step 3/3. This Xylella fastidiosa (strain 9a5c) protein is Argininosuccinate lyase.